The primary structure comprises 527 residues: Putative ABC transporter peptide-binding protein BOV_A0352 (527 aa).

The first 23 residues, 1–23 (MRLRNFYSALALSAAVFAGPLYA), serve as a signal peptide directing secretion.

Belongs to the bacterial solute-binding protein 5 family. As to quaternary structure, the complex is composed of two ATP-binding proteins (BOV_A0347 and BOV_A0348), two transmembrane proteins (BOV_A0350 and BOV_A0351) and a solute-binding protein (BOV_A0352).

Its subcellular location is the periplasm. Probably part of an ABC transporter complex that could be involved in peptide import. The protein is Putative ABC transporter peptide-binding protein BOV_A0352 of Brucella ovis (strain ATCC 25840 / 63/290 / NCTC 10512).